The following is a 167-amino-acid chain: Ribosome maturation factor RimM (167 aa).

Residues 94-165 (EHEYYYSDII…TIKITPMEGL (72 aa)) form the PRC barrel domain.

This sequence belongs to the RimM family. In terms of assembly, binds ribosomal protein uS19.

The protein localises to the cytoplasm. An accessory protein needed during the final step in the assembly of 30S ribosomal subunit, possibly for assembly of the head region. Essential for efficient processing of 16S rRNA. May be needed both before and after RbfA during the maturation of 16S rRNA. It has affinity for free ribosomal 30S subunits but not for 70S ribosomes. This is Ribosome maturation factor RimM from Staphylococcus epidermidis (strain ATCC 12228 / FDA PCI 1200).